Here is an 89-residue protein sequence, read N- to C-terminus: Acyl-CoA-binding protein (89 aa).

The ACB domain maps to 3–88; sequence LKEEFEEHAE…VKQLFEAAGS (86 aa). Residues 30-34, lysine 56, and tyrosine 75 each bind an acyl-CoA; that span reads YGLYK.

Belongs to the ACBP family.

Its function is as follows. Binds medium- and long-chain acyl-CoA esters with very high affinity and may function as an intracellular carrier of acyl-CoA esters. The protein is Acyl-CoA-binding protein of Gossypium hirsutum (Upland cotton).